The primary structure comprises 619 residues: Zinc finger protein 668 (619 aa).

Met1 is subject to N-acetylmethionine. Phosphoserine is present on Ser10. Residues 22–44 (YKCLSCTKTFPNAPRAARHAATH) form a C2H2-type 1 zinc finger. A disordered region spans residues 34–79 (APRAARHAATHGPADCSEEVAEVKPKPETEAKAEEASGEKVSGSAA). Basic and acidic residues predominate over residues 54–71 (AEVKPKPETEAKAEEASG). Glycyl lysine isopeptide (Lys-Gly) (interchain with G-Cter in SUMO2) cross-links involve residues Lys57, Lys59, Lys65, and Lys80. 11 C2H2-type zinc fingers span residues 84–106 (YACPLCPKAYKTAPELRSHGRSH), 112–134 (FPCPECGRRFMQPVCLRVHLASH), 140–162 (FRCAHCPKAYGALSKLKIHQRGH), 168–190 (YACADCGKSFADPSVFRKHRRTH), 196–218 (YSCERCGKAYAELKDLRNHERSH), 224–246 (FLCSECGKSFSRSSSLTCHQRIH), 252–274 (YRCPACGKGFTQLSSYQSHERTH), 280–302 (FLCPRCGRMFSDPSSFRRHQRAH), 308–330 (YHCEKCGKDFRQPADLAMHRRVH), 336–358 (FKCLQCDKTFVASWDLKRHALVH), and 364–386 (FRCEECGRAFAERASLTKHSRVH). Lys154 is covalently cross-linked (Glycyl lysine isopeptide (Lys-Gly) (interchain with G-Cter in SUMO2)). Ser387 carries the phosphoserine modification. The C2H2-type 13 zinc-finger motif lies at 392–414 (FHCNACGKSFVVSSSLRKHERTH). The interval 492 to 513 (REAPGPLEGAGEAGGEEADEKP) is disordered. Lys512 participates in a covalent cross-link: Glycyl lysine isopeptide (Lys-Gly) (interchain with G-Cter in SUMO2). C2H2-type zinc fingers lie at residues 516-538 (FVCRECKETFSTMTLLRRHERSH), 544-566 (FPCTQCGKSFSDRAGLRKHSRTH), and 572-594 (YTCPHCPKAFLSASDLRKHERTH).

The protein belongs to the krueppel C2H2-type zinc-finger protein family.

Its subcellular location is the nucleus. In terms of biological role, may be involved in transcriptional regulation. May play a role in DNA repair process. In Homo sapiens (Human), this protein is Zinc finger protein 668 (ZNF668).